A 1470-amino-acid chain; its full sequence is Isonitrile lipopeptide synthase (1470 aa).

The disordered stretch occupies residues 584-603 (PEPESQEAARPTAPAPTAPA). The Carrier domain occupies 974 to 1049 (AHDSTLERTI…ELARFLKQQE (76 aa)). Ser1009 is modified (O-(pantetheine 4'-phosphoryl)serine). Positions 1049-1059 (EQQAHAQVQPR) are enriched in low complexity. Residues 1049 to 1070 (EQQAHAQVQPRPAGPGLPPTLL) are disordered.

The protein belongs to the ATP-dependent AMP-binding enzyme family. Requires pantetheine 4'-phosphate as cofactor.

The catalysed reaction is 2 a (3R)-3-isocyanyl-fatty acyl-[ACP] + L-lysine + ATP + 2 NADPH = an isonitrile lipopeptide + 2 holo-[ACP] + AMP + diphosphate + 2 NADP(+). It carries out the reaction 2 (3R)-3-isocyanylbutanoyl-[ACP] + L-lysine + ATP + 2 NADPH = (2S)-2,6-bis[(3R)-3-isocyanobutanamido]hexan-1-ol + 2 holo-[ACP] + AMP + diphosphate + 2 NADP(+). Its function is as follows. Nonribosomal peptide synthetase (NRPS) involved in the biosynthesis of a unique class of isonitrile lipopeptides (INLPs). Catalyzes the final step in the pathway, i.e. the condensation of a (3R)-3-isocyanyl-fatty acyl-[ACP] to both amino groups of a lysine, producing isonitrile lipopeptides. Can use (3R)-3-isocyanylbutanoyl-[ACP] as substrate, leading to (2S)-2,6-bis[(3R)-3-isocyanobutanamido]hexan-1-ol. The sequence is that of Isonitrile lipopeptide synthase from Streptomyces coeruleorubidus.